Consider the following 189-residue polypeptide: MRIYHSNNFRSGRKIIFENEPCLIESSEFVKPGKGQSFVRVKLRKLLTKQLIEKTFKSTDSLEIADIIEYTLSYLYNDGRFWYFINNNTFEELSVDEKIIGVHKKWLLEQDTCIVTLWNNQPISITPNNFVNLKVIHVQATLKGDTINTSSTKLATLSTGAIVRVPLFIQVGSLIKVDTRSGEYVSRIK.

The residue at position 34 (lysine 34) is an N6-(3,6-diaminohexanoyl)-5-hydroxylysine.

The protein belongs to the elongation factor P family. Post-translationally, may be beta-lysylated on the epsilon-amino group of Lys-34 by the combined action of EpmA and EpmB, and then hydroxylated on the C5 position of the same residue by EpmC (if this protein is present). Lysylation is critical for the stimulatory effect of EF-P on peptide-bond formation. The lysylation moiety may extend toward the peptidyltransferase center and stabilize the terminal 3-CCA end of the tRNA. Hydroxylation of the C5 position on Lys-34 may allow additional potential stabilizing hydrogen-bond interactions with the P-tRNA.

The protein localises to the cytoplasm. Its pathway is protein biosynthesis; polypeptide chain elongation. Involved in peptide bond synthesis. Alleviates ribosome stalling that occurs when 3 or more consecutive Pro residues or the sequence PPG is present in a protein, possibly by augmenting the peptidyl transferase activity of the ribosome. Modification of Lys-34 is required for alleviation. This Buchnera aphidicola subsp. Acyrthosiphon pisum (strain APS) (Acyrthosiphon pisum symbiotic bacterium) protein is Elongation factor P.